Reading from the N-terminus, the 180-residue chain is DNA-directed RNA polymerase subunit Rpo7 (180 aa).

Positions 82 to 165 (QEVVEGEVLQ…RLPRIALTMR (84 aa)) constitute an S1 motif domain.

It belongs to the eukaryotic RPB7/RPC8 RNA polymerase subunit family. As to quaternary structure, part of the 13-subunit RNA polymerase complex. Forms a stalk with Rpo4 that extends from the main structure.

Its subcellular location is the cytoplasm. It catalyses the reaction RNA(n) + a ribonucleoside 5'-triphosphate = RNA(n+1) + diphosphate. Its function is as follows. DNA-dependent RNA polymerase (RNAP) catalyzes the transcription of DNA into RNA using the four ribonucleoside triphosphates as substrates. This is DNA-directed RNA polymerase subunit Rpo7 from Saccharolobus solfataricus (strain ATCC 35092 / DSM 1617 / JCM 11322 / P2) (Sulfolobus solfataricus).